The sequence spans 100 residues: Small ribosomal subunit protein bS21 (100 aa).

A compositionally biased stretch (basic and acidic residues) spans 37–52 (EKPSEKKAREKAEAVR). The segment at 37–100 (EKPSEKKARE…GAGAGPRGPR (64 aa)) is disordered. Over residues 53–62 (RARKLARKKL) the composition is skewed to basic residues. The span at 84–100 (GAAGAGAGAGAGPRGPR) shows a compositional bias: gly residues.

This sequence belongs to the bacterial ribosomal protein bS21 family.

This chain is Small ribosomal subunit protein bS21, found in Rhodopseudomonas palustris (strain BisB5).